The sequence spans 130 residues: MAQAQYAGTGRRKNAVARVRLVPGTGKITVNKKDVEEYIPHADLRLIINQPFAVTSTEGSYDVFVNVVGGGYGGQSGAIRHGIARALLQVDPDFRDSLKRAGLLTRDARMVERKKPGLKKARKASQFSKR.

It belongs to the universal ribosomal protein uS9 family.

The protein is Small ribosomal subunit protein uS9 of Streptococcus pyogenes serotype M1.